Reading from the N-terminus, the 375-residue chain is POU domain, class 3, transcription factor 1 (375 aa).

3 disordered regions span residues 1–29 (MAATAQYLPRNNSLPSNPLMHPDSDRMHQ), 56–139 (MSLT…QPLI), and 151–200 (MLGP…PSSD). Composition is skewed to polar residues over residues 107–117 (VHQQTPSSHAW), 130–139 (PGSNSHQPLI), and 151–160 (MLGPQASSLH). Residues 162-171 (SMRDPLHDDP) show a composition bias toward basic and acidic residues. In terms of domain architecture, POU-specific spans 194-268 (EDAPSSDDLE…LLNKWLEETD (75 aa)). Residues 286 to 345 (KRKKRTSIEVGVKGALENHFLKCPKPSAHEITSLADSLQLEKEVVRVWFCNRRQKEKRMT) constitute a DNA-binding region (homeobox).

This sequence belongs to the POU transcription factor family. Class-3 subfamily.

The protein resides in the nucleus. In terms of biological role, acts as a transcription factor. May play a role in neuronal differentiation. In Xenopus tropicalis (Western clawed frog), this protein is POU domain, class 3, transcription factor 1.